Consider the following 129-residue polypeptide: UPF0102 protein Mnod_0024 (129 aa).

It belongs to the UPF0102 family.

This is UPF0102 protein Mnod_0024 from Methylobacterium nodulans (strain LMG 21967 / CNCM I-2342 / ORS 2060).